Reading from the N-terminus, the 84-residue chain is UPF0298 protein NWMN_0985 (84 aa).

This sequence belongs to the UPF0298 family.

Its subcellular location is the cytoplasm. The sequence is that of UPF0298 protein NWMN_0985 from Staphylococcus aureus (strain Newman).